A 68-amino-acid polypeptide reads, in one-letter code: conotoxin S11.3 (68 aa).

An N-terminal signal peptide occupies residues 1-26 (MMFRLTSVSCFLLVIVCLNLFQVVLT). Disulfide bonds link C29-C43, C36-C48, C42-C52, and C47-C56. Y60 carries the tyrosine amide modification. Positions 64 to 68 (ATFQE) are excised as a propeptide.

The protein belongs to the conotoxin I2 superfamily. As to expression, expressed by the venom duct.

The protein resides in the secreted. This is conotoxin S11.3 from Conus striatus (Striated cone).